Here is a 519-residue protein sequence, read N- to C-terminus: Bifunctional pantoate ligase/cytidylate kinase (519 aa).

The pantoate--beta-alanine ligase stretch occupies residues 1–282 (MNLTILRTKT…CGNTRLIDHG (282 aa)). Residue 30–37 (MGGLHQGH) coordinates ATP. His-37 functions as the Proton donor in the catalytic mechanism. Gln-66 is a (R)-pantoate binding site. Position 66 (Gln-66) interacts with beta-alanine. 155–158 (GEKD) lines the ATP pocket. Gln-161 contributes to the (R)-pantoate binding site. An ATP-binding site is contributed by 192–195 (CSSR). The segment at 283-519 (FLMKRNPIVA…PQEVWPTNAT (237 aa)) is cytidylate kinase.

This sequence in the N-terminal section; belongs to the pantothenate synthetase family. In the C-terminal section; belongs to the cytidylate kinase family. Type 1 subfamily.

The protein resides in the cytoplasm. It catalyses the reaction (R)-pantoate + beta-alanine + ATP = (R)-pantothenate + AMP + diphosphate + H(+). The catalysed reaction is CMP + ATP = CDP + ADP. It carries out the reaction dCMP + ATP = dCDP + ADP. Its pathway is cofactor biosynthesis; (R)-pantothenate biosynthesis; (R)-pantothenate from (R)-pantoate and beta-alanine: step 1/1. In terms of biological role, catalyzes the condensation of pantoate with beta-alanine in an ATP-dependent reaction via a pantoyl-adenylate intermediate. Functionally, catalyzes the transfer of a phosphate group from ATP to either CMP or dCMP to form CDP or dCDP and ADP, respectively. The chain is Bifunctional pantoate ligase/cytidylate kinase from Prochlorococcus marinus (strain SARG / CCMP1375 / SS120).